The primary structure comprises 480 residues: Glycogen synthase (480 aa).

It belongs to the glycosyltransferase 1 family. Bacterial/plant glycogen synthase subfamily.

It catalyses the reaction [(1-&gt;4)-alpha-D-glucosyl](n) + ADP-alpha-D-glucose = [(1-&gt;4)-alpha-D-glucosyl](n+1) + ADP + H(+). It functions in the pathway glycan biosynthesis; glycogen biosynthesis. In terms of biological role, synthesizes alpha-1,4-glucan chains using ADP-glucose. This Rhizobium etli (strain ATCC 51251 / DSM 11541 / JCM 21823 / NBRC 15573 / CFN 42) protein is Glycogen synthase.